Consider the following 317-residue polypeptide: N-acetylmuramoyl-L-alanine amidase XlyB (317 aa).

Residues 1–39 form the signal peptide; the sequence is MSIPVKKNLVSEAKYALKCPNAMSAEYITIHNTANDASA. One can recognise an N-acetylmuramoyl-L-alanine amidase domain in the interval 40 to 142; the sequence is ANEISYMIGN…QDWSGKYCPH (103 aa). A LysM domain is found at 177-221; the sequence is SEYHVKKGDTLSGIAASHGASVKTLQSINHITDPNHIKIGQVIKL.

It belongs to the N-acetylmuramoyl-L-alanine amidase 2 family.

The protein resides in the secreted. It carries out the reaction Hydrolyzes the link between N-acetylmuramoyl residues and L-amino acid residues in certain cell-wall glycopeptides.. In terms of biological role, autolysins are involved in some important biological processes such as cell separation, cell-wall turnover, competence for genetic transformation, formation of the flagella and sporulation. The chain is N-acetylmuramoyl-L-alanine amidase XlyB (xlyB) from Bacillus subtilis (strain 168).